The primary structure comprises 311 residues: Olfactory receptor 5P3 (311 aa).

Over 1 to 25 (MGTGNDTTVVEFTLLGLSEDTTVCA) the chain is Extracellular. N5 is a glycosylation site (N-linked (GlcNAc...) asparagine). The chain crosses the membrane as a helical span at residues 26–46 (ILFLVFLGIYVVTLMGNISII). The Cytoplasmic segment spans residues 47-54 (VLIRRSHH). A helical membrane pass occupies residues 55-75 (LHTPMYIFLCHLAFVDIGYSS). Residues 76 to 99 (SVTPVMLMSFLRKETSLPVAGCVA) lie on the Extracellular side of the membrane. The cysteines at positions 97 and 189 are disulfide-linked. Residues 100 to 120 (QLCSVVTFGTAECFLLAAMAY) traverse the membrane as a helical segment. Residues 121-139 (DRYVAICSPLLYSTCMSPG) are Cytoplasmic-facing. A helical membrane pass occupies residues 140–160 (VCIILVGMSYLGGCVNAWTFI). Over 161 to 196 (GCLLRLSFCGPNKVNHFFCDYSPLLKLACSHDFTFE) the chain is Extracellular. The helical transmembrane segment at 197-217 (IIPAISSGSIIVATVCVIAIS) threads the bilayer. Residues 218 to 237 (YIYILITILKMHSTKGRHKA) are Cytoplasmic-facing. Residues 238-258 (FSTCTSHLTAVTLFYGTITFI) traverse the membrane as a helical segment. Over 259 to 271 (YVMPKSSYSTDQN) the chain is Extracellular. The helical transmembrane segment at 272 to 292 (KVVSVFYTVVIPMLNPLIYSL) threads the bilayer. Over 293-311 (RNKEIKGALKRELRIKIFS) the chain is Cytoplasmic.

Belongs to the G-protein coupled receptor 1 family. In terms of tissue distribution, expressed in the tongue.

Its subcellular location is the cell membrane. In terms of biological role, odorant receptor (Potential). May be involved in taste perception. The sequence is that of Olfactory receptor 5P3 (OR5P3) from Homo sapiens (Human).